Consider the following 88-residue polypeptide: Small ribosomal subunit protein bS20 (88 aa).

A compositionally biased stretch (basic residues) spans 1–21 (MANSKSAKKRALQSEKRRQHN). The disordered stretch occupies residues 1–27 (MANSKSAKKRALQSEKRRQHNASRSSM).

Belongs to the bacterial ribosomal protein bS20 family.

Its function is as follows. Binds directly to 16S ribosomal RNA. In Shewanella piezotolerans (strain WP3 / JCM 13877), this protein is Small ribosomal subunit protein bS20.